A 170-amino-acid polypeptide reads, in one-letter code: UPF0260 protein RPE_1881 (170 aa).

It belongs to the UPF0260 family.

The protein is UPF0260 protein RPE_1881 of Rhodopseudomonas palustris (strain BisA53).